A 156-amino-acid polypeptide reads, in one-letter code: Isotocin-neurophysin IT 2 (156 aa).

The N-terminal stretch at 1–19 (MTGAAVSVCLLYALSVCSA) is a signal peptide. Cys20 and Cys25 are disulfide-bonded. Gly28 carries the post-translational modification Glycine amide. 7 disulfides stabilise this stretch: Cys41–Cys85, Cys44–Cys58, Cys52–Cys75, Cys59–Cys65, Cys92–Cys105, Cys99–Cys117, and Cys106–Cys111.

Belongs to the vasopressin/oxytocin family. In terms of processing, seven disulfide bonds are present in neurophysin.

Its subcellular location is the secreted. Functionally, isotocin causes contraction of smooth muscles. In Oncorhynchus keta (Chum salmon), this protein is Isotocin-neurophysin IT 2.